A 344-amino-acid chain; its full sequence is Ubiquitin-associated domain-containing protein 2 (344 aa).

The signal sequence occupies residues 1–34; the sequence is MFTSTGSNGLYKAPLSKSLLLVPSAISILLTLLF. Over 35 to 91 the chain is Extracellular; sequence QHYQKFFAYNLQAIKEDFQIWRLVCGRVICLDLKDTFCSSLLIYNFRIFERRYGSRK. A helical transmembrane segment spans residues 92–111; sequence FSSFLLGAWTLSALFDLLLV. Residues 112-123 are Cytoplasmic-facing; it reads EAAQYVFGITIN. Residues 124 to 142 form a helical membrane-spanning segment; sequence SLPSGFLGPVFALFVPFYC. Over 143–162 the chain is Extracellular; sequence SIPRVQVTQVLGYFSITNKT. Asn-160 is a glycosylation site (N-linked (GlcNAc...) asparagine). The helical transmembrane segment at 163 to 183 threads the bilayer; the sequence is LVYILGLQLLTSGSYIWILAL. Topologically, residues 184-344 are cytoplasmic; sequence SGLISGICYN…NVATNFLLQH (161 aa). Positions 284-307 are disordered; sequence RHNENYQDHHPSDQDTPPPTEVSE. Basic and acidic residues predominate over residues 286–296; sequence NENYQDHHPSD. The region spanning 304-344 is the UBA domain; sequence EVSEEQVARLMEMGFSRGDALEALRASNNDLNVATNFLLQH.

The protein localises to the endoplasmic reticulum membrane. Functionally, restricts trafficking of FAF2 from the endoplasmic reticulum to lipid droplets. May negatively regulate the canonical Wnt signaling pathway in the lymphocytes. The polypeptide is Ubiquitin-associated domain-containing protein 2 (UBAC2) (Gallus gallus (Chicken)).